We begin with the raw amino-acid sequence, 516 residues long: MEPAVSLAVCALLFLLWVRVKGLEFVLIHQRWVFVCLFLLPLSLIFDIYYYVRAWVVFKLSSAPRLHEQRVRDIQKQVREWKEQGSKTFMCTGRPGWLTVSLRVGKYKKTHKNIMINLMDILEVDTKKQIVRVEPLVSMGQVTALLNSIGWTLPVLPELDDLTVGGLIMGTGIESSSHKYGLFQHICTAYELILADGSFVRCTPSENSDLFYAVPWSCGTLGFLVAAEIRIIPAKKYVKLRFEPVRGLEAICEKFTRESQRLENHFVEGLLYSLDEAVIMTGVMTDDVEPSKLNSIGSYYKPWFFKHVENYLKTNREGLEYIPLRHYYHRHTRSIFWELQDIIPFGNNPIFRYLFGWMVPPKISLLKLTQGETLRKLYEQHHVVQDMLVPMKCMSQALHTFQNDIHVYPIWLCPFILPSQPGLVHPKGDEAELYVDIGAYGEPRVKHFEARSCMRQLEKFVRSVHGFQMLYADCYMNREEFWEMFDGSLYHKLRKQLGCQDAFPEVYDKICKAARH.

The first 22 residues, 1 to 22 (MEPAVSLAVCALLFLLWVRVKG), serve as a signal peptide directing secretion. The Lumenal segment spans residues 23–31 (LEFVLIHQR). A helical membrane pass occupies residues 32–52 (WVFVCLFLLPLSLIFDIYYYV). Topologically, residues 53–516 (RAWVVFKLSS…YDKICKAARH (464 aa)) are cytoplasmic. The region spanning 58–234 (FKLSSAPRLH…VAAEIRIIPA (177 aa)) is the FAD-binding PCMH-type domain. 163-175 (TVGGLIMGTGIES) lines the FAD pocket.

It belongs to the FAD-binding oxidoreductase/transferase type 4 family. FAD is required as a cofactor.

It is found in the endoplasmic reticulum membrane. Its subcellular location is the golgi apparatus membrane. It catalyses the reaction 5alpha-cholest-8-en-3beta-ol + NADP(+) = zymosterol + NADPH + H(+). The enzyme catalyses cholesterol + NADP(+) = desmosterol + NADPH + H(+). The catalysed reaction is lanosterol + NADPH + H(+) = 24,25-dihydrolanosterol + NADP(+). It participates in steroid biosynthesis; cholesterol biosynthesis. Catalyzes the reduction of the delta-24 double bond of sterol intermediates during cholesterol biosynthesis. In addition to its cholesterol-synthesizing activity, can protect cells from oxidative stress by reducing caspase 3 activity during apoptosis induced by oxidative stress. Also protects against amyloid-beta peptide-induced apoptosis. This chain is Delta(24)-sterol reductase (Dhcr24), found in Mus musculus (Mouse).